Here is a 388-residue protein sequence, read N- to C-terminus: Dual specificity mitogen-activated protein kinase kinase 1 (388 aa).

Residues 1-20 (PIQLNPAPDGSAVNGTSSAE) are disordered. The 296-residue stretch at 61 to 356 (FEKISELGAG…LKQLMIHAFI (296 aa)) folds into the Protein kinase domain. ATP contacts are provided by residues 67–75 (LGAGNGGVV) and Lys-90. Asp-183 serves as the catalytic Proton acceptor. Phosphoserine; by RAF is present on residues Ser-211 and Ser-215. The interval 275-299 (DSPVTETSPRQRAPGRPMSSYGSDS) is disordered.

The protein belongs to the protein kinase superfamily. STE Ser/Thr protein kinase family. MAP kinase kinase subfamily. MAPKK is itself dependent on Ser/Thr phosphorylation for activity catalyzed by MAP kinase kinase kinases (RAF or MEKK1).

It is found in the cytoplasm. It localises to the cytoskeleton. The protein resides in the microtubule organizing center. The protein localises to the centrosome. Its subcellular location is the spindle pole body. It is found in the nucleus. It catalyses the reaction L-seryl-[protein] + ATP = O-phospho-L-seryl-[protein] + ADP + H(+). It carries out the reaction L-threonyl-[protein] + ATP = O-phospho-L-threonyl-[protein] + ADP + H(+). The catalysed reaction is L-tyrosyl-[protein] + ATP = O-phospho-L-tyrosyl-[protein] + ADP + H(+). Dual specificity protein kinase which acts as an essential component of the MAP kinase signal transduction pathway. Binding of extracellular ligands such as growth factors, cytokines and hormones to their cell-surface receptors activates RAS and this initiates RAF1 activation. RAF1 then further activates the dual-specificity protein kinases MAP2K1/MEK1 and MAP2K2/MEK2. Both MAP2K1/MEK1 and MAP2K2/MEK2 function specifically in the MAPK/ERK cascade, and catalyze the concomitant phosphorylation of a threonine and a tyrosine residue in a Thr-Glu-Tyr sequence located in the extracellular signal-regulated kinases MAPK3/ERK1 and MAPK1/ERK2, leading to their activation and further transduction of the signal within the MAPK/ERK cascade. Depending on the cellular context, this pathway mediates diverse biological functions such as cell growth, adhesion, survival and differentiation predominantly through the regulation of transcription, metabolism and cytoskeletal rearrangements. This is Dual specificity mitogen-activated protein kinase kinase 1 (MAP2K1) from Serinus canaria (Island canary).